Reading from the N-terminus, the 167-residue chain is Transmembrane protein 229B (167 aa).

Residues 1–14 (MASAEPLTALSRWY) lie on the Cytoplasmic side of the membrane. A helical membrane pass occupies residues 15–35 (LYAIHGYFCEVMFTAAWEFVV). The Extracellular segment spans residues 36–40 (NLNWK). Residues 41-61 (FPGVTSVWALFIYGTSILIVE) traverse the membrane as a helical segment. At 62–73 (RMYLRLRGRCPL) the chain is on the cytoplasmic side. Residues 74 to 94 (LLRCLIYTLWTYLWEFTTGFI) traverse the membrane as a helical segment. Over 95–109 (LRQFNACPWDYSQFD) the chain is Extracellular. A helical transmembrane segment spans residues 110 to 130 (FDFMGLITLEYAVPWFCGALI). Over 131–167 (MEQFIIRNTLRLRFDKDAEPGEPSGALALANGHVKTD) the chain is Cytoplasmic.

It belongs to the TMEM229 family.

It is found in the membrane. The polypeptide is Transmembrane protein 229B (TMEM229B) (Homo sapiens (Human)).